A 107-amino-acid polypeptide reads, in one-letter code: Glutaredoxin 4 (107 aa).

The Glutaredoxin domain maps to 4-106 (IEKIERQIKD…KIISNAVLNS (103 aa)). Glutathione is bound at residue Lys-21. Cys-29 provides a ligand contact to [2Fe-2S] cluster. Residues Arg-58, Phe-70, and 83–84 (CS) contribute to the glutathione site.

Belongs to the glutaredoxin family. Monothiol subfamily. Homodimer.

It is found in the cytoplasm. In terms of biological role, monothiol glutaredoxin involved in the biogenesis of iron-sulfur clusters. In Buchnera aphidicola subsp. Schizaphis graminum (strain Sg), this protein is Glutaredoxin 4 (grxD).